The primary structure comprises 208 residues: Large ribosomal subunit protein uL3 (208 aa).

Residues 134-159 (SKFHREAGSTGHCTTPGRSFKNTTMP) form a disordered region. Positions 144 to 158 (GHCTTPGRSFKNTTM) are enriched in polar residues.

This sequence belongs to the universal ribosomal protein uL3 family. Part of the 50S ribosomal subunit. Forms a cluster with proteins L14 and L19.

Functionally, one of the primary rRNA binding proteins, it binds directly near the 3'-end of the 23S rRNA, where it nucleates assembly of the 50S subunit. This chain is Large ribosomal subunit protein uL3, found in Treponema denticola (strain ATCC 35405 / DSM 14222 / CIP 103919 / JCM 8153 / KCTC 15104).